The primary structure comprises 263 residues: Type II restriction enzyme TthHB8I (263 aa).

The catalysed reaction is Endonucleolytic cleavage of DNA to give specific double-stranded fragments with terminal 5'-phosphates.. In terms of biological role, a P subtype restriction enzyme that recognizes the double-stranded sequence 5'-TCGA-3' and cleaves after T-1. The chain is Type II restriction enzyme TthHB8I (tthHB8IR) from Thermus thermophilus (strain ATCC 27634 / DSM 579 / HB8).